A 55-amino-acid polypeptide reads, in one-letter code: Large ribosomal subunit protein bL33 (55 aa).

This sequence belongs to the bacterial ribosomal protein bL33 family.

The protein is Large ribosomal subunit protein bL33 of Sinorhizobium fredii (strain NBRC 101917 / NGR234).